A 744-amino-acid chain; its full sequence is Phosphoribosylformylglycinamidine synthase subunit PurL (744 aa).

His45 is an active-site residue. ATP contacts are provided by Tyr48 and Lys87. Glu89 provides a ligand contact to Mg(2+). Substrate-binding positions include 90 to 93 (SHNH) and Arg112. Catalysis depends on His91, which acts as the Proton acceptor. Mg(2+) is bound at residue Asp113. Gln236 contacts substrate. Mg(2+) is bound at residue Asp264. 308 to 310 (ESQ) is a binding site for substrate. Residues Asn492 and Gly529 each coordinate ATP. Asn530 lines the Mg(2+) pocket. Ser532 is a substrate binding site.

This sequence belongs to the FGAMS family. In terms of assembly, monomer. Part of the FGAM synthase complex composed of 1 PurL, 1 PurQ and 2 PurS subunits.

It localises to the cytoplasm. The enzyme catalyses N(2)-formyl-N(1)-(5-phospho-beta-D-ribosyl)glycinamide + L-glutamine + ATP + H2O = 2-formamido-N(1)-(5-O-phospho-beta-D-ribosyl)acetamidine + L-glutamate + ADP + phosphate + H(+). Its pathway is purine metabolism; IMP biosynthesis via de novo pathway; 5-amino-1-(5-phospho-D-ribosyl)imidazole from N(2)-formyl-N(1)-(5-phospho-D-ribosyl)glycinamide: step 1/2. In terms of biological role, part of the phosphoribosylformylglycinamidine synthase complex involved in the purines biosynthetic pathway. Catalyzes the ATP-dependent conversion of formylglycinamide ribonucleotide (FGAR) and glutamine to yield formylglycinamidine ribonucleotide (FGAM) and glutamate. The FGAM synthase complex is composed of three subunits. PurQ produces an ammonia molecule by converting glutamine to glutamate. PurL transfers the ammonia molecule to FGAR to form FGAM in an ATP-dependent manner. PurS interacts with PurQ and PurL and is thought to assist in the transfer of the ammonia molecule from PurQ to PurL. This Erythrobacter litoralis (strain HTCC2594) protein is Phosphoribosylformylglycinamidine synthase subunit PurL.